The sequence spans 280 residues: Type 1 encapsulin shell protein (280 aa).

This sequence belongs to the encapsulin family. Family 1 subfamily. This encapsulin nanocompartment is formed by 60 subunits; monomers form pentamers which assemble to form shells. There are 12 pores where the pentamers meet as well as 3-fold axis channels and dimer channels; none are larger than 3-4 Angstroms in diameter. The N-terminus of the protein is inside the shell, the C-terminus is outside.

It is found in the encapsulin nanocompartment. Shell component of a type 1 encapsulin nanocompartment. Assembles into proteinaceous icosahedral shells 24 nm in diameter in the presence and absence of its ferritin cargo protein. The center of cargo-loaded nanocompartments is loaded with iron. The empty encapsulin nanocompartment sequesters about 2200 Fe ions while the cargo-loaded nanocompartment can maximally sequester about 4150 Fe ions. Does not have any detectable ferroxidase activity. This is Type 1 encapsulin shell protein from Rhodospirillum rubrum (strain ATCC 11170 / ATH 1.1.1 / DSM 467 / LMG 4362 / NCIMB 8255 / S1).